We begin with the raw amino-acid sequence, 408 residues long: Acetate kinase (408 aa).

Asparagine 7 contacts Mg(2+). Lysine 14 contributes to the ATP binding site. Residue arginine 91 coordinates substrate. Aspartate 148 (proton donor/acceptor) is an active-site residue. ATP contacts are provided by residues 208-212 (HLGNG) and 283-285 (DLR). Residue glutamate 388 participates in Mg(2+) binding.

This sequence belongs to the acetokinase family. Homodimer. The cofactor is Mg(2+). It depends on Mn(2+) as a cofactor.

It is found in the cytoplasm. The catalysed reaction is acetate + ATP = acetyl phosphate + ADP. Its pathway is metabolic intermediate biosynthesis; acetyl-CoA biosynthesis; acetyl-CoA from acetate: step 1/2. Catalyzes the formation of acetyl phosphate from acetate and ATP. Can also catalyze the reverse reaction. The protein is Acetate kinase of Borrelia hermsii (strain HS1 / DAH).